The chain runs to 519 residues: Protein disulfide-isomerase A5 (519 aa).

An N-terminal signal peptide occupies residues 1–21; it reads MARAGPAWLLLAIWVVLPSWL. 4 cysteine pairs are disulfide-bonded: Cys85/Cys94, Cys182/Cys185, Cys305/Cys308, and Cys426/Cys429. Thioredoxin domains are found at residues 134–261, 270–384, and 378–506; these read FLKD…NPQP, PWAD…NPEA, and WMQN…ALRE. The short motif at 516 to 519 is the Prevents secretion from ER element; that stretch reads KEEL.

It belongs to the protein disulfide isomerase family. As to quaternary structure, interacts with CALR (via P-domain).

The protein localises to the endoplasmic reticulum lumen. It carries out the reaction Catalyzes the rearrangement of -S-S- bonds in proteins.. This chain is Protein disulfide-isomerase A5 (PDIA5), found in Homo sapiens (Human).